A 443-amino-acid polypeptide reads, in one-letter code: MRIDPFKLAHWMNARKYTAAQTADLAGLPLDDLRRLLGDEANEPDPAAATALAEALSVEPSQLAADAHRNLTVVHKSAEEMHASRRPIQRDGIHFYNYYTLAAPEGRVAPVVLDILCPSDRLPALNNGHLEPAITVNLGPGDINGRWGEEITPQTWRVLHANHGGDRWITGDSYVEPSYCPHSYSLAGDAPARIVSYTAQSNISPLMTEANNWSTGAFEEALKALSGKVSAGSVLDLFLARRAHTRTSAAEAAGVPPADLEAALRSPASETGLTVLRTLGRALGFDYRVLLPADDQHDGVGKTWTTIEDSRRSRRTFGTYEAASMASAAHLPDLVGSFLRVDADGRGADLIDHAENHYVVTEGRLTLEWDGPDGPASVELEPDGSAWTGPFVRHRWHGTGTVLKFGSGAHLGYQDWLELTNTFEPAATLRRGRRDLAGWGYDN.

An HTH cro/C1-type 1 domain is found at 8–63 (LAHWMNARKYTAAQTADLAGLPLDDLRRLLGDEANEPDPAAATALAEALSVEPSQL). A substrate-binding site is contributed by lysine 16. Positions 19-38 (AAQTADLAGLPLDDLRRLLG) form a DNA-binding region, H-T-H motif. 2 residues coordinate substrate: tyrosine 98 and asparagine 126. Histidine 129 is a Fe cation binding site. 3 residues coordinate substrate: glutamate 176, histidine 182, and serine 196. Histidine 182 contacts Fe cation. The region spanning 234 to 290 (VLDLFLARRAHTRTSAAEAAGVPPADLEAALRSPASETGLTVLRTLGRALGFDYRVL) is the HTH cro/C1-type 2 domain. Positions 245–265 (TRTSAAEAAGVPPADLEAALR) form a DNA-binding region, H-T-H motif.

The protein belongs to the non-heme iron-dependent dioxygenase family. In terms of assembly, homodimer. It depends on Fe(2+) as a cofactor.

The enzyme catalyses 2-hydroxyethylphosphonate + O2 = hydroxymethylphosphonate + formate + H(+). The protein operates within secondary metabolite biosynthesis; bialaphos biosynthesis. Non-heme-dependent dioxygenase that catalyzes the conversion of 2-hydroxyethylphosphonate (HEP) to hydroxymethylphosphonate (HMP) in the biosynthesis of phosphinothricin tripeptide (PTT), also known as bialaphos (BA), a natural-product antibiotic and potent herbicide. PTT contains the unusual amino acid phosphinothricin attached to 2 alanine residues. Synthetic phosphinothricin (glufosinate) is a key component of commercial herbicides. The protein is 2-hydroxyethylphosphonate dioxygenase (hepD) of Streptomyces viridochromogenes (strain DSM 40736 / JCM 4977 / BCRC 1201 / Tue 494).